The chain runs to 235 residues: Eukaryotic translation initiation factor 4E-1 (235 aa).

Positions 16 to 25 (VNKHRGVRSD) are enriched in basic and acidic residues. Residues 16-56 (VNKHRGVRSDGEEDEQLEEGEIVGGDADTLSSSSSSRPGTA) form a disordered region. Residues 26-36 (GEEDEQLEEGE) are compositionally biased toward acidic residues. EIF4G-binding stretches follow at residues 60-63 (HPLE) and 70-106 (FDTP…NNIH). Residues 78–83 (KQVAWG), Lys110, and 128–129 (WE) contribute to the mRNA site. Residues Cys133 and Cys171 are joined by a disulfide bond. An EIF4G-binding region spans residues 154 to 163 (YTLLAMIGEQ). MRNA contacts are provided by residues 178-183 (RARQEK) and 223-227 (KTLDR).

It belongs to the eukaryotic initiation factor 4E family. In terms of assembly, EIF4F is a multi-subunit complex, the composition of which varies with external and internal environmental conditions. It is composed of at least EIF4A, EIF4E and EIF4G. EIF4E is also known to interact with other partners. In higher plants two isoforms of EIF4F have been identified, named isoform EIF4F and isoform EIF(iso)4F. Isoform EIF4F has subunits p220 and p26, whereas isoform EIF(iso)4F has subunits p82 and p28. As to quaternary structure, (Microbial infection) Interacts with potyvirus viral genome-linked protein (VPg); this interaction is possible in susceptible hosts but impaired in resistant plants. According to the redox status, the Cys-133-Cys-171 disulfide bridge may have a role in regulating protein function by affecting its ability to bind capped mRNA.

The protein localises to the nucleus. Its subcellular location is the cytoplasm. In terms of biological role, component of the protein complex eIF4F, which is involved in the recognition of the mRNA cap, ATP-dependent unwinding of 5'-terminal secondary structure and recruitment of mRNA to the ribosome. Recognizes and binds the 7-methylguanosine-containing mRNA cap during an early step in the initiation of protein synthesis and facilitates ribosome binding by inducing the unwinding of the mRNAs secondary structures. Key component of recessive resistance to potyviruses. (Microbial infection) Susceptibility host factor required for viral infection by recruiting viral RNAs to the host ribosomal complex via an interaction with viral genome-linked protein (VPg). In Lactuca sativa (Garden lettuce), this protein is Eukaryotic translation initiation factor 4E-1.